A 146-amino-acid polypeptide reads, in one-letter code: Hemoglobin subunit beta (146 aa).

At valine 1 the chain carries N-acetylvaline. Residues 2–146 (HLSADEKNAL…VANALAHKYH (145 aa)) form the Globin domain. Position 44 is a phosphoserine (serine 44). Residue lysine 59 is modified to N6-acetyllysine. Residue histidine 63 coordinates heme b. Lysine 82 bears the N6-acetyllysine mark. Histidine 92 is a heme b binding site. Cysteine 93 is subject to S-nitrosocysteine. The residue at position 144 (lysine 144) is an N6-acetyllysine.

The protein belongs to the globin family. As to quaternary structure, heterotetramer of two alpha chains and two beta chains. In terms of tissue distribution, red blood cells.

Functionally, involved in oxygen transport from the lung to the various peripheral tissues. The polypeptide is Hemoglobin subunit beta (Sciurus carolinensis (Eastern gray squirrel)).